Here is a 306-residue protein sequence, read N- to C-terminus: Pyridoxal 5'-phosphate synthase subunit SNZERR (306 aa).

A D-ribose 5-phosphate-binding site is contributed by aspartate 34. The active-site Schiff-base intermediate with D-ribose 5-phosphate is the lysine 91. Glycine 163 serves as a coordination point for D-ribose 5-phosphate. Arginine 175 is a binding site for D-glyceraldehyde 3-phosphate. Residues glycine 224 and 245–246 each bind D-ribose 5-phosphate; that span reads GS.

It belongs to the PdxS/SNZ family.

It catalyses the reaction aldehydo-D-ribose 5-phosphate + D-glyceraldehyde 3-phosphate + L-glutamine = pyridoxal 5'-phosphate + L-glutamate + phosphate + 3 H2O + H(+). It functions in the pathway cofactor biosynthesis; pyridoxal 5'-phosphate biosynthesis. Functionally, catalyzes the formation of pyridoxal 5'-phosphate from ribose 5-phosphate (RBP), glyceraldehyde 3-phosphate (G3P) and ammonia. The ammonia is provided by PDX2. Can also use ribulose 5-phosphate and dihydroxyacetone phosphate as substrates, resulting from enzyme-catalyzed isomerization of RBP and G3P, respectively. Also plays an indirect role in resistance to singlet oxygen-generating photosensitizers. The polypeptide is Pyridoxal 5'-phosphate synthase subunit SNZERR (SNZERR) (Suberites domuncula (Sponge)).